The sequence spans 151 residues: Large ribosomal subunit protein uL22c (151 aa).

It belongs to the universal ribosomal protein uL22 family. In terms of assembly, part of the 50S ribosomal subunit.

The protein localises to the plastid. It localises to the chloroplast. Its function is as follows. This protein binds specifically to 23S rRNA. Functionally, the globular domain of the protein is located near the polypeptide exit tunnel on the outside of the subunit, while an extended beta-hairpin is found that lines the wall of the exit tunnel in the center of the 70S ribosome. In Gossypium barbadense (Sea Island cotton), this protein is Large ribosomal subunit protein uL22c (rpl22).